The following is a 500-amino-acid chain: Farnesylcysteine lyase (500 aa).

The N-terminal stretch at 1-24 (MKDFPIAISLLFALLSPVLLPCSG) is a signal peptide. N-linked (GlcNAc...) asparagine glycosylation is found at Asn56, Asn113, Asn211, and Asn281.

The protein belongs to the prenylcysteine oxidase family. The cofactor is FAD. Expressed in seedilings, flowers, stems, leaves and roots.

It localises to the lysosome. The enzyme catalyses S-(2E,6E)-farnesyl-L-cysteine + O2 + H2O = (2E,6E)-farnesal + L-cysteine + H2O2. Involved in the degradation of prenylcysteine. Cleaves specifically the thioether bond of S-farnesyl-L-cysteine and has no activity with S-geranylgeranyl-L-cysteine. Also recognizes N-acetyl-farnesylcysteine and may have a role in deprenylation of farnesylated proteins. This is Farnesylcysteine lyase from Arabidopsis thaliana (Mouse-ear cress).